We begin with the raw amino-acid sequence, 136 residues long: Putative pre-16S rRNA nuclease (136 aa).

It belongs to the YqgF nuclease family.

The protein localises to the cytoplasm. In terms of biological role, could be a nuclease involved in processing of the 5'-end of pre-16S rRNA. This chain is Putative pre-16S rRNA nuclease, found in Francisella tularensis subsp. tularensis (strain FSC 198).